A 328-amino-acid chain; its full sequence is tRNA(Ile)-lysidine synthase (328 aa).

Position 35–40 (35–40 (SGGADS)) interacts with ATP.

The protein belongs to the tRNA(Ile)-lysidine synthase family.

Its subcellular location is the cytoplasm. The enzyme catalyses cytidine(34) in tRNA(Ile2) + L-lysine + ATP = lysidine(34) in tRNA(Ile2) + AMP + diphosphate + H(+). In terms of biological role, ligates lysine onto the cytidine present at position 34 of the AUA codon-specific tRNA(Ile) that contains the anticodon CAU, in an ATP-dependent manner. Cytidine is converted to lysidine, thus changing the amino acid specificity of the tRNA from methionine to isoleucine. The chain is tRNA(Ile)-lysidine synthase from Polaromonas naphthalenivorans (strain CJ2).